Consider the following 22-residue polypeptide: Cysteine proteinase (22 aa).

The tract at residues 1 to 22 (GADDSDWRKKGAVNVIXKDQGQ) is disordered.

It belongs to the peptidase C1 family.

The chain is Cysteine proteinase from Trichomonas vaginalis.